A 254-amino-acid polypeptide reads, in one-letter code: 5'-nucleotidase SurE (254 aa).

Residues Asp-8, Asp-9, Ser-38, and Asn-91 each coordinate a divalent metal cation.

This sequence belongs to the SurE nucleotidase family. A divalent metal cation is required as a cofactor.

It localises to the cytoplasm. The catalysed reaction is a ribonucleoside 5'-phosphate + H2O = a ribonucleoside + phosphate. Its function is as follows. Nucleotidase that shows phosphatase activity on nucleoside 5'-monophosphates. The protein is 5'-nucleotidase SurE of Anaeromyxobacter dehalogenans (strain 2CP-C).